We begin with the raw amino-acid sequence, 340 residues long: MTTDAVQTMIPTLDVTERPAPRPKVEAGVKLRGAEKVARIPVKIIPTTELPKKPDWIRVRIPVSPEVDRIKSLLRKHKLHSVCEEASCPNLGECFSGGTATFMIMGDICTRRCPFCDVGHGRPKPLDVNEPESLAIAIADLKLKYVVITSVDRDDLRDGGAQHFADCIREIRKLSPNVQLETLVPDYRGRMDIALEITAAEPPDVFNHNLETVPRLYKAARPGSDYQWSLTLLQRFKQMMPHIPTKSGLMLGLGETDDEVIEVMKRMREHDIDMLTLGQYLQPSRSHLPVQRFVHPDTFAWFAEEGYKMGFKNVASGPLVRSSYHADEQAKLVKAELLGS.

Positions 83, 88, 94, 109, 113, 116, and 323 each coordinate [4Fe-4S] cluster. The 218-residue stretch at 95 to 312 folds into the Radical SAM core domain; it reads FSGGTATFMI…AEEGYKMGFK (218 aa).

It belongs to the radical SAM superfamily. Lipoyl synthase family. [4Fe-4S] cluster is required as a cofactor.

It localises to the cytoplasm. The enzyme catalyses [[Fe-S] cluster scaffold protein carrying a second [4Fe-4S](2+) cluster] + N(6)-octanoyl-L-lysyl-[protein] + 2 oxidized [2Fe-2S]-[ferredoxin] + 2 S-adenosyl-L-methionine + 4 H(+) = [[Fe-S] cluster scaffold protein] + N(6)-[(R)-dihydrolipoyl]-L-lysyl-[protein] + 4 Fe(3+) + 2 hydrogen sulfide + 2 5'-deoxyadenosine + 2 L-methionine + 2 reduced [2Fe-2S]-[ferredoxin]. It functions in the pathway protein modification; protein lipoylation via endogenous pathway; protein N(6)-(lipoyl)lysine from octanoyl-[acyl-carrier-protein]: step 2/2. In terms of biological role, catalyzes the radical-mediated insertion of two sulfur atoms into the C-6 and C-8 positions of the octanoyl moiety bound to the lipoyl domains of lipoate-dependent enzymes, thereby converting the octanoylated domains into lipoylated derivatives. This Pseudomonas fluorescens (strain Pf0-1) protein is Lipoyl synthase.